We begin with the raw amino-acid sequence, 376 residues long: 1-deoxy-D-xylulose 5-phosphate reductoisomerase (376 aa).

7 residues coordinate NADPH: Thr-12, Gly-13, Ser-14, Ile-15, Arg-39, Gln-40, and Asn-110. Residue Lys-111 participates in 1-deoxy-D-xylulose 5-phosphate binding. Glu-112 provides a ligand contact to NADPH. Residue Asp-136 coordinates Mn(2+). 1-deoxy-D-xylulose 5-phosphate contacts are provided by Ser-137, Glu-138, Ser-162, and His-185. Glu-138 provides a ligand contact to Mn(2+). Gly-191 lines the NADPH pocket. Ser-198, Asn-203, Lys-204, and Glu-207 together coordinate 1-deoxy-D-xylulose 5-phosphate. Glu-207 contributes to the Mn(2+) binding site.

It belongs to the DXR family. The cofactor is Mg(2+). Mn(2+) serves as cofactor.

It catalyses the reaction 2-C-methyl-D-erythritol 4-phosphate + NADP(+) = 1-deoxy-D-xylulose 5-phosphate + NADPH + H(+). Its pathway is isoprenoid biosynthesis; isopentenyl diphosphate biosynthesis via DXP pathway; isopentenyl diphosphate from 1-deoxy-D-xylulose 5-phosphate: step 1/6. Functionally, catalyzes the NADPH-dependent rearrangement and reduction of 1-deoxy-D-xylulose-5-phosphate (DXP) to 2-C-methyl-D-erythritol 4-phosphate (MEP). The sequence is that of 1-deoxy-D-xylulose 5-phosphate reductoisomerase from Treponema pallidum (strain Nichols).